The primary structure comprises 106 residues: Thiosulfate sulfurtransferase GlpE (106 aa).

One can recognise a Rhodanese domain in the interval Glu-17–Arg-105. Cys-65 serves as the catalytic Cysteine persulfide intermediate.

This sequence belongs to the GlpE family.

The protein localises to the cytoplasm. The catalysed reaction is thiosulfate + hydrogen cyanide = thiocyanate + sulfite + 2 H(+). It catalyses the reaction thiosulfate + [thioredoxin]-dithiol = [thioredoxin]-disulfide + hydrogen sulfide + sulfite + 2 H(+). Its function is as follows. Transferase that catalyzes the transfer of sulfur from thiosulfate to thiophilic acceptors such as cyanide or dithiols. May function in a CysM-independent thiosulfate assimilation pathway by catalyzing the conversion of thiosulfate to sulfite, which can then be used for L-cysteine biosynthesis. The sequence is that of Thiosulfate sulfurtransferase GlpE from Vibrio campbellii (strain ATCC BAA-1116).